Reading from the N-terminus, the 188-residue chain is Pyridoxal 5'-phosphate synthase subunit PdxT (188 aa).

46-48 (GES) lines the L-glutamine pocket. Catalysis depends on C78, which acts as the Nucleophile. L-glutamine-binding positions include R105 and 134-135 (IR). Active-site charge relay system residues include H170 and E172.

Belongs to the glutaminase PdxT/SNO family. In the presence of PdxS, forms a dodecamer of heterodimers. Only shows activity in the heterodimer.

The catalysed reaction is aldehydo-D-ribose 5-phosphate + D-glyceraldehyde 3-phosphate + L-glutamine = pyridoxal 5'-phosphate + L-glutamate + phosphate + 3 H2O + H(+). It catalyses the reaction L-glutamine + H2O = L-glutamate + NH4(+). It participates in cofactor biosynthesis; pyridoxal 5'-phosphate biosynthesis. Functionally, catalyzes the hydrolysis of glutamine to glutamate and ammonia as part of the biosynthesis of pyridoxal 5'-phosphate. The resulting ammonia molecule is channeled to the active site of PdxS. This Clostridium kluyveri (strain ATCC 8527 / DSM 555 / NBRC 12016 / NCIMB 10680 / K1) protein is Pyridoxal 5'-phosphate synthase subunit PdxT.